The following is a 261-amino-acid chain: Leucine-rich repeat-containing protein 61 (261 aa).

LRR repeat units follow at residues 54 to 75 (GLEW…ASLR), 76 to 97 (QLAV…AACE), and 98 to 119 (NLQC…QCLA). Residues 138–183 (NPLCASPCYWASVRELLPGLKVLDGERVSGRGSDFYQLCRDLDSSL) form the LRRCT domain.

The sequence is that of Leucine-rich repeat-containing protein 61 (LRRC61) from Bos taurus (Bovine).